The primary structure comprises 709 residues: Twinkle homolog protein, chloroplastic/mitochondrial (709 aa).

The transit peptide at 1 to 16 (MRFLLRLPQIHFRKLS) directs the protein to the chloroplast and mitochondrion. A Toprim domain is found at 280–385 (SEVIIVEGEI…KKSEDEHFKD (106 aa)). 3 residues coordinate Mg(2+): glutamate 286, aspartate 348, and aspartate 350. An SF4 helicase domain is found at 430–698 (THGHEYGVST…GSYSDSPVTP (269 aa)). 460–467 (GIPNSGKS) is a binding site for ATP.

Requires Mg(2+) as cofactor. Expressed in young leaves and shoot apex tissues. Detected in developing tissues such as cotyledons, sepals, pistils and inflorescences. Nearly undetectable in mature leaves.

The protein localises to the plastid. It localises to the chloroplast. It is found in the mitochondrion. The catalysed reaction is ATP + H2O = ADP + phosphate + H(+). Its function is as follows. Has both DNA primase and DNA helicase activities and may be involved in organelle DNA replication. Capable of producing RNA primers of 9 to 18 bases from a single-stranded DNA template. The sequence is that of Twinkle homolog protein, chloroplastic/mitochondrial from Arabidopsis thaliana (Mouse-ear cress).